Reading from the N-terminus, the 274-residue chain is Bis(5'-nucleosyl)-tetraphosphatase, symmetrical (274 aa).

It belongs to the Ap4A hydrolase family.

It carries out the reaction P(1),P(4)-bis(5'-adenosyl) tetraphosphate + H2O = 2 ADP + 2 H(+). Functionally, hydrolyzes diadenosine 5',5'''-P1,P4-tetraphosphate to yield ADP. This chain is Bis(5'-nucleosyl)-tetraphosphatase, symmetrical, found in Shewanella sp. (strain MR-4).